We begin with the raw amino-acid sequence, 124 residues long: U13-hexatoxin-Mg1a (124 aa).

The N-terminal stretch at 1 to 17 (MKLSALVFVASVMLVAA) is a signal peptide. The propeptide occupies 18 to 52 (SPVKDVEEPVETHLAADLKTIEELAKYEEAAVQKR). Cystine bridges form between C54-C72, C65-C78, C69-C116, and C71-C87.

Expressed by the venom gland.

It is found in the secreted. Its function is as follows. No toxicity is observed upon intracranial injection into mice and intrathorax injection into crickets. The chain is U13-hexatoxin-Mg1a from Macrothele gigas (Japanese funnel web spider).